Here is a 697-residue protein sequence, read N- to C-terminus: Serotransferrin (697 aa).

Residues 1-19 form the signal peptide; that stretch reads MRLTVGALLACAALGLCLA. 2 Transferrin-like domains span residues 25–347 and 360–682; these read VKWC…NQQE and VKWC…NMRK. Cystine bridges form between Cys28-Cys67 and Cys38-Cys58. Arg42 is subject to Dimethylated arginine. Fe(3+)-binding residues include Asp82 and Tyr114. 8 cysteine pairs are disulfide-bonded: Cys137-Cys213, Cys156-Cys350, Cys177-Cys193, Cys180-Cys196, Cys190-Cys198, Cys246-Cys260, Cys363-Cys395, and Cys373-Cys386. Hydrogencarbonate is bound by residues Thr139, Arg143, Ala145, and Gly146. Tyr207 serves as a coordination point for Fe(3+). His268 contacts Fe(3+). Ser388 carries the phosphoserine modification. Asp410 and Tyr448 together coordinate Fe(3+). 8 disulfides stabilise this stretch: Cys420/Cys692, Cys435/Cys655, Cys472/Cys543, Cys496/Cys683, Cys506/Cys520, Cys517/Cys526, Cys583/Cys597, and Cys633/Cys638. Positions 474, 478, 480, and 481 each coordinate hydrogencarbonate. Asn513 is a glycosylation site (N-linked (GlcNAc...) asparagine). Tyr537 contacts Fe(3+). Residue His605 coordinates Fe(3+). The residue at position 684 (Ser684) is a Phosphoserine.

Belongs to the transferrin family. Monomer. Part of a complex composed of SLC40A1/ferroportin, TF/transferrin and HEPH/hephaestin that transfers iron from cells to transferrin. Expressed by the liver and secreted in plasma.

The protein localises to the secreted. Functionally, transferrins are iron binding transport proteins which can bind two Fe(3+) ions in association with the binding of an anion, usually bicarbonate. It is responsible for the transport of iron from sites of absorption and heme degradation to those of storage and utilization. Serum transferrin may also have a further role in stimulating cell proliferation. This chain is Serotransferrin (Tf), found in Mus musculus (Mouse).